Reading from the N-terminus, the 79-residue chain is Acyl carrier protein (79 aa).

The region spanning 4 to 79 is the Carrier domain; it reads EQILVDVQEA…DVVAYIETKL (76 aa). Position 39 is an O-(pantetheine 4'-phosphoryl)serine (S39).

The protein belongs to the acyl carrier protein (ACP) family. 4'-phosphopantetheine is transferred from CoA to a specific serine of apo-ACP by AcpS. This modification is essential for activity because fatty acids are bound in thioester linkage to the sulfhydryl of the prosthetic group.

Its subcellular location is the cytoplasm. Its pathway is lipid metabolism; fatty acid biosynthesis. In terms of biological role, carrier of the growing fatty acid chain in fatty acid biosynthesis. This is Acyl carrier protein from Exiguobacterium sp. (strain ATCC BAA-1283 / AT1b).